An 82-amino-acid polypeptide reads, in one-letter code: Small ribosomal subunit protein bS18 (82 aa).

The tract at residues 1-25 (MKRNNMKRARMEQSRRPKKNPLKAE) is disordered.

Belongs to the bacterial ribosomal protein bS18 family. As to quaternary structure, part of the 30S ribosomal subunit. Forms a tight heterodimer with protein bS6.

Binds as a heterodimer with protein bS6 to the central domain of the 16S rRNA, where it helps stabilize the platform of the 30S subunit. The protein is Small ribosomal subunit protein bS18 of Corynebacterium urealyticum (strain ATCC 43042 / DSM 7109).